The chain runs to 351 residues: 3-ketosteroid-9-alpha-monooxygenase, ferredoxin reductase component (351 aa).

Residues 10–116 (SRSVILTVSA…LPPAGVFTPK (107 aa)) form the FAD-binding FR-type domain. Residues 264–351 (ATVEVELDGE…PVTDHLKIEF (88 aa)) enclose the 2Fe-2S ferredoxin-type domain. [2Fe-2S] cluster contacts are provided by Cys-300, Cys-305, Cys-308, and Cys-338.

In terms of assembly, the two-component system 3-ketosteroid-9-alpha-monooxygenase is composed of an oxygenase component KshA and a reductase component KshB. Requires FAD as cofactor. The cofactor is [2Fe-2S] cluster.

The enzyme catalyses androsta-1,4-diene-3,17-dione + 2 reduced [2Fe-2S]-[ferredoxin] + O2 + 2 H(+) = 9alpha-hydroxyandrosta-1,4-diene-3,17-dione + 2 oxidized [2Fe-2S]-[ferredoxin] + H2O. The protein operates within steroid metabolism; cholesterol degradation. KSH activity is completely inhibited by zinc ions. KshB is specifically inhibited by Cu(2+) ions. Probably involved in the degradation of cholesterol. In vitro, catalyzes the introduction of a 9alpha-hydroxyl moiety into the ring B of 3-ketosteroid substrates such as 1,4-androstadiene-3,17-dione (ADD), 4-androstene-3,17-dione (AD), 4-androstene-17beta-ol-3-one (testosterone), 4-pregnene-3,20-dione (progesterone), 19-nor-4-androstene-3,17-dione (nordion), 1-(5alpha)-androstene-3,17-dione, 5alpha-androstane-3,17-dione and 5beta-androstane-3,17-dione. KSH has the highest activity with 3-keto-Delta4 steroid substrates. This chain is 3-ketosteroid-9-alpha-monooxygenase, ferredoxin reductase component, found in Rhodococcus rhodochrous.